A 291-amino-acid chain; its full sequence is Homeobox protein SIX2 (291 aa).

Positions 124–183 (GEETSYCFKEKSRSVLREWYAHNPYPSPREKRELAEATGLTTTQVSNWFKNRRQRDRAAE) form a DNA-binding region, homeobox. The disordered stretch occupies residues 168-279 (VSNWFKNRRQ…HHHGLQDSIL (112 aa)). The segment covering 179-190 (DRAAEAKERENN) has biased composition (basic and acidic residues). Residues 224–233 (HSSSSPALLL) are compositionally biased toward low complexity. Residues 249–259 (PPGPSAVPVPV) are compositionally biased toward pro residues.

This sequence belongs to the SIX/Sine oculis homeobox family. As to quaternary structure, interacts with TCF7L2; in a canonical Wnt signaling independent manner; prevents transcription of differentiation genes in cap mesenchyme. Interacts with OSR1; form a strong repressor complex with TCF7L2, TLE2 and TLE3 to prevent the activation of Wnt/beta-catenin target genes in the cap mesenchyme. Interacts with HOXA11, EYA1 and EYA3. In terms of tissue distribution, strongly expressed in skeletal muscle. Expressed in Wilms' tumor and in the cap mesenchyme of fetal kidney (at protein level).

The protein localises to the nucleus. Functionally, transcription factor that plays an important role in the development of several organs, including kidney, skull and stomach. During kidney development, maintains cap mesenchyme multipotent nephron progenitor cells in an undifferentiated state by opposing the inductive signals emanating from the ureteric bud and cooperates with WNT9B to promote renewing progenitor cells proliferation. Acts through its interaction with TCF7L2 and OSR1 in a canonical Wnt signaling independent manner preventing transcription of differentiation genes in cap mesenchyme such as WNT4. Also acts independently of OSR1 to activate expression of many cap mesenchyme genes, including itself, GDNF and OSR1. During craniofacial development plays a role in growth and elongation of the cranial base through regulation of chondrocyte differentiation. During stomach organogenesis, controls pyloric sphincter formation and mucosal growth through regulation of a gene network including NKX2-5, BMPR1B, BMP4, SOX9 and GREM1. During branchial arch development, acts to mediate HOXA2 control over the insulin-like growth factor pathway. May also be involved in limb tendon and ligament development. Plays a role in cell proliferation and migration. This chain is Homeobox protein SIX2 (SIX2), found in Homo sapiens (Human).